The chain runs to 421 residues: Gamma-glutamyl phosphate reductase (421 aa).

The protein belongs to the gamma-glutamyl phosphate reductase family.

It localises to the cytoplasm. The catalysed reaction is L-glutamate 5-semialdehyde + phosphate + NADP(+) = L-glutamyl 5-phosphate + NADPH + H(+). Its pathway is amino-acid biosynthesis; L-proline biosynthesis; L-glutamate 5-semialdehyde from L-glutamate: step 2/2. In terms of biological role, catalyzes the NADPH-dependent reduction of L-glutamate 5-phosphate into L-glutamate 5-semialdehyde and phosphate. The product spontaneously undergoes cyclization to form 1-pyrroline-5-carboxylate. This chain is Gamma-glutamyl phosphate reductase, found in Acinetobacter baumannii (strain SDF).